A 494-amino-acid polypeptide reads, in one-letter code: Cobyric acid synthase (494 aa).

The 198-residue stretch at 248-445 (ELEIAVLKLP…LHGIFDNGPW (198 aa)) folds into the GATase cobBQ-type domain. The active-site Nucleophile is the cysteine 329. Histidine 437 is a catalytic residue.

This sequence belongs to the CobB/CobQ family. CobQ subfamily.

It participates in cofactor biosynthesis; adenosylcobalamin biosynthesis. Catalyzes amidations at positions B, D, E, and G on adenosylcobyrinic A,C-diamide. NH(2) groups are provided by glutamine, and one molecule of ATP is hydrogenolyzed for each amidation. The polypeptide is Cobyric acid synthase (Synechococcus sp. (strain WH7803)).